The primary structure comprises 113 residues: rRNA-processing protein cgrA (113 aa).

Over residues 1-15 (MSTITTSSVASSNGM) the composition is skewed to polar residues. The interval 1–113 (MSTITTSSVA…REKRNKLLHS (113 aa)) is disordered. Residues 37-100 (SYEKRLEARK…EKMHRKRVER (64 aa)) are a coiled coil. The span at 38 to 92 (YEKRLEARKLQEAVKEHEREMREEREAERKAQIQKIKDRRAAKEEKERYEKMAEK) shows a compositional bias: basic and acidic residues. Over residues 93–113 (MHRKRVERLKRREKRNKLLHS) the composition is skewed to basic residues.

The protein belongs to the CGR1 family.

The protein localises to the nucleus. It is found in the nucleolus. Functionally, involved in nucleolar integrity and required for processing of the pre-rRNA for the 60S ribosome subunit. The chain is rRNA-processing protein cgrA (cgrA) from Aspergillus clavatus (strain ATCC 1007 / CBS 513.65 / DSM 816 / NCTC 3887 / NRRL 1 / QM 1276 / 107).